The sequence spans 180 residues: 3-hydroxyanthranilate 3,4-dioxygenase (180 aa).

Arg-46 is a binding site for O2. The Fe cation site is built by His-50, Glu-56, and His-94. A substrate-binding site is contributed by Glu-56. 2 residues coordinate substrate: Arg-98 and Glu-109. Residues Cys-124, Cys-127, Cys-161, and Cys-164 each contribute to the Fe cation site.

This sequence belongs to the 3-HAO family. As to quaternary structure, homodimer. The cofactor is Fe(2+).

The catalysed reaction is 3-hydroxyanthranilate + O2 = (2Z,4Z)-2-amino-3-carboxymuconate 6-semialdehyde. The protein operates within cofactor biosynthesis; NAD(+) biosynthesis; quinolinate from L-kynurenine: step 3/3. Catalyzes the oxidative ring opening of 3-hydroxyanthranilate to 2-amino-3-carboxymuconate semialdehyde, which spontaneously cyclizes to quinolinate. The chain is 3-hydroxyanthranilate 3,4-dioxygenase from Ruegeria pomeroyi (strain ATCC 700808 / DSM 15171 / DSS-3) (Silicibacter pomeroyi).